A 245-amino-acid polypeptide reads, in one-letter code: OVARIAN TUMOR DOMAIN-containing deubiquitinating enzyme 11 (245 aa).

A disordered region spans residues 1-37; that stretch reads MDENHRNPFANASTSARASGSTSASSNSSFSSSVADT. Residues 10–35 are compositionally biased toward low complexity; it reads ANASTSARASGSTSASSNSSFSSSVA. Residues 101-225 enclose the OTU domain; it reads LAELQMEGDG…EVHYNSLYAN (125 aa). The active site involves Asp-109. Residue Cys-112 is the Nucleophile of the active site. The active site involves His-218.

The protein belongs to the peptidase C85 family.

The catalysed reaction is Thiol-dependent hydrolysis of ester, thioester, amide, peptide and isopeptide bonds formed by the C-terminal Gly of ubiquitin (a 76-residue protein attached to proteins as an intracellular targeting signal).. In terms of biological role, hydrolase that can remove conjugated ubiquitin from proteins in vitro and may therefore play an important regulatory role at the level of protein turnover by preventing degradation. Inactive cysteine protease. The protein is OVARIAN TUMOR DOMAIN-containing deubiquitinating enzyme 11 of Arabidopsis thaliana (Mouse-ear cress).